A 186-amino-acid chain; its full sequence is Interferon lambda-3 (186 aa).

The N-terminal stretch at 1–21 is a signal peptide; that stretch reads MVCYGVTIILVGTLGSLLVGA. Disulfide bonds link Cys-31–Cys-128, Cys-65–Cys-160, and Cys-178–Cys-185.

Belongs to the lambda interferon family.

The protein localises to the secreted. In terms of biological role, cytokine which plays a critical role in the antiviral host defense, predominantly in the epithelial tissues. Acts as a ligand for the heterodimeric class II cytokine receptor composed of IL10RB and IFNLR1, and receptor engagement leads to the activation of the JAK/STAT signaling pathway resulting in the expression of IFN-stimulated genes (ISG), which mediate the antiviral state. Has a restricted receptor distribution and therefore restricted targets: is primarily active in epithelial cells and this cell type-selective action is because of the epithelial cell-specific expression of its receptor IFNLR1. Exhibits antiviral activity against the H5N1 influenza A virus. Induces the expression of the antiviral MX protein in epithelial-rich tissues, such as intestine, trachea and lung. This chain is Interferon lambda-3 (IFNL3), found in Gallus gallus (Chicken).